Here is a 454-residue protein sequence, read N- to C-terminus: F-box protein At1g67130 (454 aa).

Positions 4-53 constitute an F-box domain; sequence GETLDSIPTDLILDILSRLPTKSIARFHCVSKLWSSMLASQDFTRLFVNR.

The sequence is that of F-box protein At1g67130 from Arabidopsis thaliana (Mouse-ear cress).